The chain runs to 71 residues: Pro-MCH (71 aa).

The first 20 residues, 1–20, serve as a signal peptide directing secretion; it reads AKMNLSSYILILTFSLFSQG.

It belongs to the melanin-concentrating hormone family.

The protein localises to the secreted. The chain is Pro-MCH (PMCH) from Pan paniscus (Pygmy chimpanzee).